The following is a 262-amino-acid chain: Co-chaperone protein DjlA (262 aa).

Topologically, residues 1–6 (MRFWGK) are periplasmic. The chain crosses the membrane as a helical span at residues 7 to 30 (FFGFVIGFMFGRFFGALLGLWLGH). Topologically, residues 31–262 (LYDKRPGGGA…DRVKSERGMR (232 aa)) are cytoplasmic. Positions 196–262 (DAYHLLGITA…DRVKSERGMR (67 aa)) constitute a J domain.

In terms of assembly, homodimer.

The protein resides in the cell inner membrane. In terms of biological role, regulatory DnaK co-chaperone. Direct interaction between DnaK and DjlA is needed for the induction of the wcaABCDE operon, involved in the synthesis of a colanic acid polysaccharide capsule, possibly through activation of the RcsB/RcsC phosphotransfer signaling pathway. The colanic acid capsule may help the bacterium survive conditions outside the host. This chain is Co-chaperone protein DjlA, found in Shewanella oneidensis (strain ATCC 700550 / JCM 31522 / CIP 106686 / LMG 19005 / NCIMB 14063 / MR-1).